Reading from the N-terminus, the 435-residue chain is Metacaspase-1A (435 aa).

2 disordered regions span residues Met1–Pro46 and Tyr106–Gly129. Over residues Ser36–Pro46 the composition is skewed to pro residues. Residues His231 and Cys287 contribute to the active site.

The protein belongs to the peptidase C14B family.

Involved in cell death (apoptosis). This is Metacaspase-1A (casA) from Neosartorya fischeri (strain ATCC 1020 / DSM 3700 / CBS 544.65 / FGSC A1164 / JCM 1740 / NRRL 181 / WB 181) (Aspergillus fischerianus).